Reading from the N-terminus, the 74-residue chain is Delta-stichotoxin-Sgt2a (74 aa).

The N-terminal stretch at 1–19 is a signal peptide; that stretch reads MNRLIILVFAAVFLTLASA. The propeptide occupies 20–28; that stretch reads EVSEDVNMA. 3 cysteine pairs are disulfide-bonded: cysteine 34-cysteine 71, cysteine 36-cysteine 64, and cysteine 57-cysteine 72.

The protein belongs to the sea anemone sodium channel inhibitory toxin family. Type I subfamily.

It localises to the secreted. Its subcellular location is the nematocyst. Its function is as follows. Binds specifically to voltage-gated sodium channels (Nav), thereby delaying their inactivation during signal transduction. This chain is Delta-stichotoxin-Sgt2a, found in Stichodactyla gigantea (Giant carpet anemone).